An 875-amino-acid chain; its full sequence is Protein translocase subunit SecA (875 aa).

ATP-binding positions include glutamine 87, 105-109, and aspartate 512; that span reads GEGKT. Zn(2+) contacts are provided by cysteine 860, cysteine 862, cysteine 871, and histidine 872.

Belongs to the SecA family. In terms of assembly, monomer and homodimer. Part of the essential Sec protein translocation apparatus which comprises SecA, SecYEG and auxiliary proteins SecDF-YajC and YidC. It depends on Zn(2+) as a cofactor.

Its subcellular location is the cell inner membrane. It localises to the cytoplasm. The catalysed reaction is ATP + H2O + cellular proteinSide 1 = ADP + phosphate + cellular proteinSide 2.. Its function is as follows. Part of the Sec protein translocase complex. Interacts with the SecYEG preprotein conducting channel. Has a central role in coupling the hydrolysis of ATP to the transfer of proteins into and across the cell membrane, serving both as a receptor for the preprotein-SecB complex and as an ATP-driven molecular motor driving the stepwise translocation of polypeptide chains across the membrane. This chain is Protein translocase subunit SecA, found in Buchnera aphidicola subsp. Acyrthosiphon pisum (strain APS) (Acyrthosiphon pisum symbiotic bacterium).